Here is a 401-residue protein sequence, read N- to C-terminus: NALCN channel auxiliary factor 2 (401 aa).

A helical membrane pass occupies residues Leu42 to Gly62. Asn77, Asn97, Asn153, and Asn178 each carry an N-linked (GlcNAc...) asparagine glycan. A helical membrane pass occupies residues Leu362–Cys382.

The protein belongs to the NALF family.

It localises to the membrane. Functionally, probable component of the NALCN channel complex, a channel that regulates the resting membrane potential and controls neuronal excitability. The sequence is that of NALCN channel auxiliary factor 2 (nalf2) from Danio rerio (Zebrafish).